Here is a 625-residue protein sequence, read N- to C-terminus: tRNA uridine 5-carboxymethylaminomethyl modification enzyme MnmG (625 aa).

Residue Gly-11–Gly-16 coordinates FAD. Gly-271–Phe-285 contributes to the NAD(+) binding site.

It belongs to the MnmG family. In terms of assembly, homodimer. Heterotetramer of two MnmE and two MnmG subunits. FAD serves as cofactor.

The protein resides in the cytoplasm. Its function is as follows. NAD-binding protein involved in the addition of a carboxymethylaminomethyl (cmnm) group at the wobble position (U34) of certain tRNAs, forming tRNA-cmnm(5)s(2)U34. The chain is tRNA uridine 5-carboxymethylaminomethyl modification enzyme MnmG from Porphyromonas gingivalis (strain ATCC BAA-308 / W83).